The sequence spans 185 residues: Ribosome-recycling factor (185 aa).

A disordered region spans residues 163–185 (LTNEATKKIDAISKDKEKEITEG). Basic and acidic residues predominate over residues 167–185 (ATKKIDAISKDKEKEITEG).

It belongs to the RRF family.

Its subcellular location is the cytoplasm. Responsible for the release of ribosomes from messenger RNA at the termination of protein biosynthesis. May increase the efficiency of translation by recycling ribosomes from one round of translation to another. The chain is Ribosome-recycling factor from Latilactobacillus sakei subsp. sakei (strain 23K) (Lactobacillus sakei subsp. sakei).